Consider the following 284-residue polypeptide: Tripartite motif-containing protein 12A (284 aa).

An RING-type zinc finger spans residues cysteine 15–arginine 59. The B box-type zinc finger occupies glutamine 91–isoleucine 132. 4 residues coordinate Zn(2+): cysteine 96, histidine 99, cysteine 118, and histidine 124. Residues alanine 130 to serine 234 adopt a coiled-coil conformation.

The protein belongs to the TRIM/RBCC family. In terms of tissue distribution, expressed in embryonic CNS, liver, kidney, olfactory epithelium.

The protein resides in the cytoplasm. The sequence is that of Tripartite motif-containing protein 12A (Trim12a) from Mus musculus (Mouse).